We begin with the raw amino-acid sequence, 350 residues long: Galactokinase (350 aa).

14 to 17 (EHTD) serves as a coordination point for substrate. ATP is bound by residues S46 and 96–102 (GAGLSSS). The Mg(2+) site is built by S102 and E134. The active-site Proton acceptor is D146. Position 196 (Y196) interacts with substrate.

It belongs to the GHMP kinase family. GalK subfamily.

The protein localises to the cytoplasm. The catalysed reaction is alpha-D-galactose + ATP = alpha-D-galactose 1-phosphate + ADP + H(+). Its pathway is carbohydrate metabolism; galactose metabolism. Functionally, catalyzes the transfer of the gamma-phosphate of ATP to D-galactose to form alpha-D-galactose-1-phosphate (Gal-1-P). The polypeptide is Galactokinase (Thermotoga neapolitana).